We begin with the raw amino-acid sequence, 224 residues long: Putative adhesin A1E_05320 (224 aa).

A signal peptide spans 1–22; the sequence is MKKLLLIAATSATMLSSTLSFA.

The sequence is that of Putative adhesin A1E_05320 from Rickettsia canadensis (strain McKiel).